Here is a 79-residue protein sequence, read N- to C-terminus: Hematopoietic cell signal transducer (79 aa).

A signal peptide spans 1 to 17 (MDPPGYLLFLLLLPVAA). The Extracellular segment spans residues 18 to 35 (SQTSAGSCSGCGTLSLPL). A helical transmembrane segment spans residues 36–56 (LAGLVAADAVMSLLIVGVVFV). The Cytoplasmic portion of the chain corresponds to 57 to 79 (CMRPHGRPAQEDGRVYINMPGRG). Tyrosine 72 is subject to Phosphotyrosine. Positions 72-74 (YIN) are GRB2 binding site. The tract at residues 72–75 (YINM) is PIK3R1 binding site.

This sequence belongs to the DAP10 family. In terms of assembly, homodimer; Disulfide-linked. Interacts with KLRK1 to form a stable complex, which results in surface expression of both proteins, whereas alone, it is minimally expressed. Interacts with PIK3R1 and GRB2. Interacts with CLEC5A. Forms an CLEC5A/TYROBP/HCST trimolecular complex depending almost solely on TYROBP. Heterohexamer composed of four subunits of HCST/DAP10 and two subunits of KLRK1. Interacts (via transmembrane domain) with KLRK1 isoform 1 (via transmembrane domain); the interaction is required for KLRK1 cell surface expression on naive NK cells and activated CD8(+) T-cells, but is dispensable on activated TYROBP-expressing NK cells. Interacts (via transmembrane domain) with KLRK1 isoform 2 (via transmembrane domain); the interaction is required for KLRK1 NK cell surface expression and induces NK cell-mediated cytotoxicity. Interacts with CD300H. Post-translationally, phosphorylated; PIK3R1 and GRB2 associate specifically with tyrosine-phosphorylated HCST. O-glycosylated.

Its subcellular location is the membrane. In terms of biological role, transmembrane adapter protein which associates with KLRK1 to form an activation receptor KLRK1-HCST in lymphoid and myeloid cells; this receptor plays a major role in triggering cytotoxicity against target cells expressing cell surface ligands such as MHC class I chain-related MICA and MICB, and UL16-binding proteins (ULBPs); these ligands are up-regulated by stress conditions and pathological state such as viral infection and tumor transformation. Functions as a docking site for PI3-kinase PIK3R1 and GRB2. Interaction of ULBPs with KLRK1-HCST triggers calcium mobilization and activation of the PIK3R1, MAP2K/ERK, and JAK2/STAT5 signaling pathways. Both PIK3R1 and GRB2 are required for full KLRK1-HCST-mediated activation and ultimate killing of target cells. In NK cells, KLRK1-HCST signaling directly induces cytotoxicity and enhances cytokine production initiated via DAP12/TYROBP-associated receptors. In T-cells, it provides primarily costimulation for TCR-induced signals. KLRK1-HCST receptor plays a role in immune surveillance against tumors and is required for cytolysis of tumors cells; indeed, melanoma cells that do not express KLRK1 ligands escape from immune surveillance mediated by NK cells. This is Hematopoietic cell signal transducer (Hcst) from Mus musculus (Mouse).